A 65-amino-acid polypeptide reads, in one-letter code: UPF0434 protein CPS_2127 (65 aa).

Belongs to the UPF0434 family.

In Colwellia psychrerythraea (strain 34H / ATCC BAA-681) (Vibrio psychroerythus), this protein is UPF0434 protein CPS_2127.